The sequence spans 478 residues: DNA-directed RNA polymerase II subunit RPB1 (478 aa).

Cys68, Cys71, Cys78, His81, Cys108, Cys111, and Cys149 together coordinate Zn(2+). Mg(2+) contacts are provided by Asp474 and Asp476.

It belongs to the RNA polymerase beta' chain family. As to quaternary structure, component of the RNA polymerase II (Pol II) complex consisting of 12 subunits. Post-translationally, phosphorylation activates POL II.

It is found in the nucleus. It catalyses the reaction RNA(n) + a ribonucleoside 5'-triphosphate = RNA(n+1) + diphosphate. Functionally, DNA-dependent RNA polymerase catalyzes the transcription of DNA into RNA using the four ribonucleoside triphosphates as substrates. Largest and catalytic component of RNA polymerase II which synthesizes mRNA precursors and many functional non-coding RNAs. Forms the polymerase active center together with the second largest subunit. Pol II is the central component of the basal RNA polymerase II transcription machinery. It is composed of mobile elements that move relative to each other. RPB1 is part of the core element with the central large cleft, the clamp element that moves to open and close the cleft and the jaws that are thought to grab the incoming DNA template. At the start of transcription, a single-stranded DNA template strand of the promoter is positioned within the central active site cleft of Pol II. A bridging helix emanates from RPB1 and crosses the cleft near the catalytic site and is thought to promote translocation of Pol II by acting as a ratchet that moves the RNA-DNA hybrid through the active site by switching from straight to bent conformations at each step of nucleotide addition. During transcription elongation, Pol II moves on the template as the transcript elongates. Elongation is influenced by the phosphorylation status of the C-terminal domain (CTD) of Pol II largest subunit (RPB1), which serves as a platform for assembly of factors that regulate transcription initiation, elongation, termination and mRNA processing. In Euplotoides octocarinatus (Freshwater ciliate), this protein is DNA-directed RNA polymerase II subunit RPB1 (RPB1).